Consider the following 160-residue polypeptide: SsrA-binding protein (160 aa).

A disordered region spans residues 136-160 (KRDTMRERDSNRELQRAVRNKGKED).

This sequence belongs to the SmpB family.

It is found in the cytoplasm. Required for rescue of stalled ribosomes mediated by trans-translation. Binds to transfer-messenger RNA (tmRNA), required for stable association of tmRNA with ribosomes. tmRNA and SmpB together mimic tRNA shape, replacing the anticodon stem-loop with SmpB. tmRNA is encoded by the ssrA gene; the 2 termini fold to resemble tRNA(Ala) and it encodes a 'tag peptide', a short internal open reading frame. During trans-translation Ala-aminoacylated tmRNA acts like a tRNA, entering the A-site of stalled ribosomes, displacing the stalled mRNA. The ribosome then switches to translate the ORF on the tmRNA; the nascent peptide is terminated with the 'tag peptide' encoded by the tmRNA and targeted for degradation. The ribosome is freed to recommence translation, which seems to be the essential function of trans-translation. The sequence is that of SsrA-binding protein from Pseudomonas putida (strain GB-1).